We begin with the raw amino-acid sequence, 353 residues long: Photosystem II D2 protein (353 aa).

Residue Thr2 is modified to N-acetylthreonine. Phosphothreonine is present on Thr2. Residues 41 to 61 (CAYFALGGWFTGTTFVTSWYT) form a helical membrane-spanning segment. Position 118 (His118) interacts with chlorophyll a. A helical transmembrane segment spans residues 125 to 141 (GFMLRQFELARSVQLRP). Gln130 and Asn143 together coordinate pheophytin a. The chain crosses the membrane as a helical span at residues 153 to 166 (VFISVFFIYPLGQS). A chlorophyll a-binding site is contributed by His198. A helical membrane pass occupies residues 208-228 (AALLCAIHGATVENTLFEDGD). Positions 215 and 262 each coordinate a plastoquinone. Fe cation is bound at residue His215. Residue His269 coordinates Fe cation. Residues 279–295 (GLWMSALGVVGLALNLR) form a helical membrane-spanning segment.

It belongs to the reaction center PufL/M/PsbA/D family. PSII is composed of 1 copy each of membrane proteins PsbA, PsbB, PsbC, PsbD, PsbE, PsbF, PsbH, PsbI, PsbJ, PsbK, PsbL, PsbM, PsbT, PsbX, PsbY, PsbZ, Psb30/Ycf12, at least 3 peripheral proteins of the oxygen-evolving complex and a large number of cofactors. It forms dimeric complexes. The D1/D2 heterodimer binds P680, chlorophylls that are the primary electron donor of PSII, and subsequent electron acceptors. It shares a non-heme iron and each subunit binds pheophytin, quinone, additional chlorophylls, carotenoids and lipids. There is also a Cl(-1) ion associated with D1 and D2, which is required for oxygen evolution. The PSII complex binds additional chlorophylls, carotenoids and specific lipids. is required as a cofactor.

It is found in the plastid membrane. The enzyme catalyses 2 a plastoquinone + 4 hnu + 2 H2O = 2 a plastoquinol + O2. Photosystem II (PSII) is a light-driven water:plastoquinone oxidoreductase that uses light energy to abstract electrons from H(2)O, generating O(2) and a proton gradient subsequently used for ATP formation. It consists of a core antenna complex that captures photons, and an electron transfer chain that converts photonic excitation into a charge separation. The D1/D2 (PsbA/PsbD) reaction center heterodimer binds P680, the primary electron donor of PSII as well as several subsequent electron acceptors. D2 is needed for assembly of a stable PSII complex. This chain is Photosystem II D2 protein, found in Cuscuta reflexa (Southern Asian dodder).